The sequence spans 476 residues: NADH-quinone oxidoreductase subunit N (476 aa).

14 helical membrane passes run 8 to 28 (ITTELALFILGLATFVLGLLV), 35 to 55 (GLGSFALLGLLLVLGITIINW), 71 to 91 (YATFFKILCLISAILVVLGSF), 102 to 122 (FEYYSTVIFTTLGMVVMASAG), 124 to 144 (FITLYLGLELMTISFVILVAF), 159 to 179 (ILLAGLSSAVLLYGLSLVYGA), 201 to 221 (LIVGVVMLVAGLGFKISAVPF), 239 to 259 (FLAVGSKAASFAVLLRLFAGG), 267 to 287 (WTLLVAVLAALSMLIGNLVAI), 295 to 315 (MLAYSSIAQAGYIMVGLVSAT), 322 to 342 (VMFYAFLYVFATIGAFTVVAI), 366 to 386 (ASVMLICLLSMAGIPPLAGFV), 405 to 425 (LGLIMSMVSVYYYLRVALVMF), and 437 to 457 (VGGAATITLVITMVATIILGI).

The protein belongs to the complex I subunit 2 family. NDH-1 is composed of 14 different subunits. Subunits NuoA, H, J, K, L, M, N constitute the membrane sector of the complex.

It localises to the cell membrane. The enzyme catalyses a quinone + NADH + 5 H(+)(in) = a quinol + NAD(+) + 4 H(+)(out). In terms of biological role, NDH-1 shuttles electrons from NADH, via FMN and iron-sulfur (Fe-S) centers, to quinones in the respiratory chain. The immediate electron acceptor for the enzyme in this species is believed to be a menaquinone. Couples the redox reaction to proton translocation (for every two electrons transferred, four hydrogen ions are translocated across the cytoplasmic membrane), and thus conserves the redox energy in a proton gradient. The chain is NADH-quinone oxidoreductase subunit N from Desulforamulus reducens (strain ATCC BAA-1160 / DSM 100696 / MI-1) (Desulfotomaculum reducens).